The primary structure comprises 467 residues: Flagellar hook-associated protein 2 (467 aa).

The stretch at Val411–Gln439 forms a coiled coil.

It belongs to the FliD family. In terms of assembly, homopentamer.

It localises to the secreted. Its subcellular location is the bacterial flagellum. Functionally, required for the morphogenesis and for the elongation of the flagellar filament by facilitating polymerization of the flagellin monomers at the tip of growing filament. Forms a capping structure, which prevents flagellin subunits (transported through the central channel of the flagellum) from leaking out without polymerization at the distal end. The polypeptide is Flagellar hook-associated protein 2 (fliD) (Salmonella typhimurium (strain LT2 / SGSC1412 / ATCC 700720)).